Reading from the N-terminus, the 538-residue chain is DALR anticodon-binding domain-containing protein 3 (538 aa).

In terms of assembly, part of a complex containing tRNA(Arg) and METTL2. Interacts with tRNA(Arg)(CCU) and tRNA(Arg)(UCU). Interacts with METTL2.

Its function is as follows. Involved in tRNA methylation. Facilitates the recognition and targeting of tRNA(Arg)(CCU) and tRNA(Arg)(UCU) substrates for N(3)-methylcytidine modification by METTL2. In Mus musculus (Mouse), this protein is DALR anticodon-binding domain-containing protein 3 (Dalrd3).